Reading from the N-terminus, the 657-residue chain is Zinc finger CCCH domain-containing protein 50 (657 aa).

ANK repeat units lie at residues 68-97 and 104-136; these read EART…CVDV and DGAT…DPAT. Over residues 176–206 the composition is skewed to low complexity; the sequence is SVASGSSSPPLSSSPDEGNRSPSSRSSSLSP. Positions 176–222 are disordered; that stretch reads SVASGSSSPPLSSSPDEGNRSPSSRSSSLSPITVDRGKKEYPVDPTL. 2 C3H1-type zinc fingers span residues 274-302 and 311-333; these read PYTA…HGVF and YRTR…AHDE. The disordered stretch occupies residues 507-566; the sequence is YSPRALDPSSLAHSPFGGMSPRSPRTMEPTSPLSARVGAPATQRPSVGSPRNSSAWGTVG. The segment covering 549–562 has biased composition (polar residues); sequence QRPSVGSPRNSSAW.

The polypeptide is Zinc finger CCCH domain-containing protein 50 (Oryza sativa subsp. japonica (Rice)).